The sequence spans 102 residues: Circadian clock oscillator protein KaiA (102 aa).

The KaiA C-terminal domain occupies 1–102 (MTQEVDQQIL…CEAYRGAIFK (102 aa)).

The protein belongs to the KaiA family. As to quaternary structure, homodimer. The KaiABC complex composition changes during the circadian cycle to control KaiC phosphorylation. Complexes KaiC(6), KaiA(2-4):KaiC(6), KaiB(6):KaiC(6) and KaiC(6):KaiB(6):KaiA(12) are among the most important forms, many form cooperatively. KaiA and CikA bind to the same region of the KaiB(fs) form and therefore compete.

In terms of biological role, key component of the KaiABC oscillator complex, which constitutes the main circadian regulator in cyanobacteria. Complex composition changes during the circadian cycle to control KaiC phosphorylation. KaiA stimulates KaiC autophosphorylation, while KaiB sequesters KaiA, leading to KaiC autodephosphorylation. KaiA binding to the KaiC CII domain during the subjective day yields KaiA(2-4):KaiC(6) complexes which stimulate KaiC autophosphorylation. Phospho-Ser-431 KaiC accumulation triggers binding of KaiB during the subjective night to form the KaiB(6):KaiC(6) complex, leading to changes in the output regulators CikA and SasA. KaiB(6):KaiC(6) formation exposes a site for KaiA binding on KaiB that sequesters KaiA from KaiC's CII domain, making the KaiC(6):KaiB(6):KaiA(12) complex resulting in KaiC autodephosphorylation. Complete dephosphorylation of KaiC leads to dissociation of KaiA(2):KaiB(1), completing 1 cycle of the Kai oscillator. The chain is Circadian clock oscillator protein KaiA from Nostoc sp. (strain PCC 7120 / SAG 25.82 / UTEX 2576).